The primary structure comprises 350 residues: MTSGMAQTVCGLLQPQKLGRTLTHEHMVMDYKSCYFKPSREQDLHLCSKKEITMQNLYWLRQNPYSNAFNLSLGDEPLEEIIAEVAEFKKEGGSTIVDNTTYGIMRNVEALKKISMATDVNIICGTGYYLDHTLPPEIKNAPIEELTQKMVNELTVGVEGTNIKCGVIGEVGCSWPLTPIEKKSLQASAAAQAETGAPLIIHPGRDESAPEEIIRILQEAGGDISRTVMSHTDRTIFNRSKLVELAATGCYVEWDLFGMETLFYQANLASDMPSDSQRIQDIKFLLDEGYEDKIVIAHDIHTRHRLKKYGGHGYAHIMVDIVPKMLMRGVTQEQIDKIQIANPRTWLTFK.

Residues His-24, His-26, Glu-170, His-202, His-231, and Asp-299 each contribute to the a divalent metal cation site.

This sequence belongs to the metallo-dependent hydrolases superfamily. Phosphotriesterase family. Requires a divalent metal cation as cofactor.

The protein is Phosphotriesterase-related protein of Nematostella vectensis (Starlet sea anemone).